Here is a 368-residue protein sequence, read N- to C-terminus: Phospho-N-acetylmuramoyl-pentapeptide-transferase (368 aa).

The next 9 helical transmembrane spans lie at 30 to 50 (AAAV…IKYL), 72 to 92 (LPTM…FLWA), 99 to 119 (VWLI…DDYM), 139 to 159 (VLLG…SVLL), 170 to 190 (LTID…TAVS), 201 to 221 (GLAS…AYLA), 238 to 258 (GGEI…FLWF), 264 to 286 (EIIM…ALLI), and 345 to 365 (KIVI…LMTL).

Belongs to the glycosyltransferase 4 family. MraY subfamily. Mg(2+) serves as cofactor.

Its subcellular location is the cell inner membrane. The catalysed reaction is UDP-N-acetyl-alpha-D-muramoyl-L-alanyl-gamma-D-glutamyl-meso-2,6-diaminopimeloyl-D-alanyl-D-alanine + di-trans,octa-cis-undecaprenyl phosphate = di-trans,octa-cis-undecaprenyl diphospho-N-acetyl-alpha-D-muramoyl-L-alanyl-D-glutamyl-meso-2,6-diaminopimeloyl-D-alanyl-D-alanine + UMP. It participates in cell wall biogenesis; peptidoglycan biosynthesis. Functionally, catalyzes the initial step of the lipid cycle reactions in the biosynthesis of the cell wall peptidoglycan: transfers peptidoglycan precursor phospho-MurNAc-pentapeptide from UDP-MurNAc-pentapeptide onto the lipid carrier undecaprenyl phosphate, yielding undecaprenyl-pyrophosphoryl-MurNAc-pentapeptide, known as lipid I. The chain is Phospho-N-acetylmuramoyl-pentapeptide-transferase from Chlorobium limicola (strain DSM 245 / NBRC 103803 / 6330).